A 395-amino-acid polypeptide reads, in one-letter code: Long-chain-alcohol dehydrogenase 1 (395 aa).

NAD(+) is bound by residues 98-102 (GSALD) and 141-144 (TTSG).

Belongs to the iron-containing alcohol dehydrogenase family. In terms of assembly, homooctamer.

The catalysed reaction is glycerol + NAD(+) = dihydroxyacetone + NADH + H(+). It carries out the reaction a long-chain primary fatty alcohol + 2 NAD(+) + H2O = a long-chain fatty acid + 2 NADH + 3 H(+). Functionally, long-chain alkyl alcohol dehydrogenase that can oxidize a broad range of alkyl alcohols from ethanol to 1-triacontanol (C2 to C30) as well as 1,3-propanediol and acetaldehyde. The best substrate is ethanol. Also oxidizes glycerol. In Geobacillus thermodenitrificans (strain NG80-2), this protein is Long-chain-alcohol dehydrogenase 1 (adh1).